The primary structure comprises 468 residues: Glutamate--tRNA ligase 2 (468 aa).

The 'HIGH' region motif lies at 11–21 (PSPTGFLHIGG). The short motif at 239–243 (KLSKR) is the 'KMSKS' region element. K242 provides a ligand contact to ATP.

The protein belongs to the class-I aminoacyl-tRNA synthetase family. Glutamate--tRNA ligase type 1 subfamily. As to quaternary structure, monomer.

It is found in the cytoplasm. The catalysed reaction is tRNA(Glu) + L-glutamate + ATP = L-glutamyl-tRNA(Glu) + AMP + diphosphate. Functionally, catalyzes the attachment of glutamate to tRNA(Glu) in a two-step reaction: glutamate is first activated by ATP to form Glu-AMP and then transferred to the acceptor end of tRNA(Glu). The polypeptide is Glutamate--tRNA ligase 2 (Ruegeria pomeroyi (strain ATCC 700808 / DSM 15171 / DSS-3) (Silicibacter pomeroyi)).